The chain runs to 200 residues: Charged multivesicular body protein 6-B (200 aa).

Glycine 2 carries N-myristoyl glycine lipidation. A coiled-coil region spans residues 9–102; that stretch reads RRSRVTEQDK…FAQIEMKVIE (94 aa). The tract at residues 165–200 is disordered; the sequence is QEDLELPEAPSEPLSDTVPEKQAVKNRPKPQLVAAS. The short motif at 168–179 is the Type-2 MIT-interacting motif element; it reads LELPEAPSEPLS.

It belongs to the SNF7 family. Probable core component of the endosomal sorting required for transport complex III (ESCRT-III). ESCRT-III components are thought to multimerize to form a flat lattice on the perimeter membrane of the endosome.

It is found in the endomembrane system. Its subcellular location is the late endosome membrane. Probable core component of the endosomal sorting required for transport complex III (ESCRT-III) which is involved in multivesicular bodies (MVBs) formation and sorting of endosomal cargo proteins into MVBs. MVBs contain intraluminal vesicles (ILVs) that are generated by invagination and scission from the limiting membrane of the endosome and mostly are delivered to lysosomes enabling degradation of membrane proteins, such as stimulated growth factor receptors, lysosomal enzymes and lipids. In the ESCRT-III complex, it probably serves as an acceptor for the ESCRT-II complex on endosomal membranes. This is Charged multivesicular body protein 6-B (chmp6-b) from Xenopus laevis (African clawed frog).